We begin with the raw amino-acid sequence, 407 residues long: Probable peptidoglycan glycosyltransferase FtsW (407 aa).

The Cytoplasmic portion of the chain corresponds to 1–25 (MSIDFRNIIKPYPSPIITGRGIDLD). A helical membrane pass occupies residues 26 to 46 (FPMLAGCLALLGLGLVMITSA). Over 47-65 (SSEVAAVQSGNTLYMMIRH) the chain is Periplasmic. The helical transmembrane segment at 66-86 (LVYLVIGLGACIVTMMIPIAT) threads the bilayer. Residues 87–89 (WQR) are Cytoplasmic-facing. The helical transmembrane segment at 90 to 110 (LGWLMLIGAFGLLIMVILPGI) threads the bilayer. Residues 111-119 (GREVNGSMR) lie on the Periplasmic side of the membrane. Residues 120–140 (WIGFGAFNVQPSEIAKVFVVI) traverse the membrane as a helical segment. Residues 141 to 155 (YLAGYLVRRQKEVRE) are Cytoplasmic-facing. Residues 156–176 (SWMGFFKPFIVLLPMAGLLLM) form a helical membrane-spanning segment. Residues 177 to 181 (EPDFG) lie on the Periplasmic side of the membrane. A helical membrane pass occupies residues 182-202 (ATVVMMGAAAAMLFLGGVGLF). Residue R203 is a topological domain, cytoplasmic. The helical transmembrane segment at 204 to 224 (FTLMVVLAVAAVTVLVQAQPY) threads the bilayer. Residues 225–283 (RMARLITFTDPWSDQFGSGYQLTQALIAFGRGEWLGVGLGNSVQKQFYLPEAHTDFVFS) are Periplasmic-facing. The helical transmembrane segment at 284-304 (VLAEELGVVGSLCTVALFVFV) threads the bilayer. Over 305–321 (CVRGMYIGMWAEKAKQY) the chain is Cytoplasmic. A helical membrane pass occupies residues 322–342 (FAAYVAYGLSFLWIGQFLINI). The Periplasmic segment spans residues 343-355 (GVNVGLLPTKGLT). Residues 356–376 (LPFLSYGGSSLVICCACLGLL) form a helical membrane-spanning segment. Over 377–407 (LRIEWESRTHLGSEEMEFSESDFAEEPTHGR) the chain is Cytoplasmic.

The protein belongs to the SEDS family. FtsW subfamily.

It is found in the cell inner membrane. The enzyme catalyses [GlcNAc-(1-&gt;4)-Mur2Ac(oyl-L-Ala-gamma-D-Glu-L-Lys-D-Ala-D-Ala)](n)-di-trans,octa-cis-undecaprenyl diphosphate + beta-D-GlcNAc-(1-&gt;4)-Mur2Ac(oyl-L-Ala-gamma-D-Glu-L-Lys-D-Ala-D-Ala)-di-trans,octa-cis-undecaprenyl diphosphate = [GlcNAc-(1-&gt;4)-Mur2Ac(oyl-L-Ala-gamma-D-Glu-L-Lys-D-Ala-D-Ala)](n+1)-di-trans,octa-cis-undecaprenyl diphosphate + di-trans,octa-cis-undecaprenyl diphosphate + H(+). It participates in cell wall biogenesis; peptidoglycan biosynthesis. Peptidoglycan polymerase that is essential for cell division. This chain is Probable peptidoglycan glycosyltransferase FtsW, found in Pseudomonas fluorescens (strain SBW25).